We begin with the raw amino-acid sequence, 191 residues long: Large ribosomal subunit protein eL15 (191 aa).

This sequence belongs to the eukaryotic ribosomal protein eL15 family.

The polypeptide is Large ribosomal subunit protein eL15 (rpl15e) (Pyrobaculum aerophilum (strain ATCC 51768 / DSM 7523 / JCM 9630 / CIP 104966 / NBRC 100827 / IM2)).